Here is a 412-residue protein sequence, read N- to C-terminus: cAMP-dependent protein kinase regulatory subunit (412 aa).

The segment at 1–142 (MSFEEVYEEL…RLKRSVAGNF (142 aa)) is dimerization and phosphorylation. Positions 101–105 (RRQSV) match the Pseudophosphorylation motif motif. At S104 the chain carries Phosphoserine. 3',5'-cyclic AMP contacts are provided by residues 143–277 (LFKN…EEVP), E224, R233, 278–412 (ILSS…STKA), E344, and R353. The disordered stretch occupies residues 392 to 412 (MGMDNEYGDQSLHRSPPSTKA).

It belongs to the cAMP-dependent kinase regulatory chain family. Tetramer, composed of 2 regulatory (R) and 2 catalytic (C) subunits. In the presence of cAMP it dissociates into 2 active monomeric C subunits and an R dimer.

The sequence is that of cAMP-dependent protein kinase regulatory subunit (cgs1) from Schizosaccharomyces pombe (strain 972 / ATCC 24843) (Fission yeast).